Reading from the N-terminus, the 329-residue chain is 4-hydroxythreonine-4-phosphate dehydrogenase (329 aa).

H136 and T137 together coordinate substrate. H166, H211, and H266 together coordinate a divalent metal cation. Residues K274, N283, and R292 each contribute to the substrate site.

The protein belongs to the PdxA family. In terms of assembly, homodimer. The cofactor is Zn(2+). Mg(2+) is required as a cofactor. Requires Co(2+) as cofactor.

It localises to the cytoplasm. It catalyses the reaction 4-(phosphooxy)-L-threonine + NAD(+) = 3-amino-2-oxopropyl phosphate + CO2 + NADH. It participates in cofactor biosynthesis; pyridoxine 5'-phosphate biosynthesis; pyridoxine 5'-phosphate from D-erythrose 4-phosphate: step 4/5. Its function is as follows. Catalyzes the NAD(P)-dependent oxidation of 4-(phosphooxy)-L-threonine (HTP) into 2-amino-3-oxo-4-(phosphooxy)butyric acid which spontaneously decarboxylates to form 3-amino-2-oxopropyl phosphate (AHAP). The sequence is that of 4-hydroxythreonine-4-phosphate dehydrogenase from Escherichia coli O7:K1 (strain IAI39 / ExPEC).